The following is a 172-amino-acid chain: Trypsin inhibitor 1A (172 aa).

Disulfide bonds link Cys-40–Cys-84 and Cys-133–Cys-139.

Belongs to the protease inhibitor I3 (leguminous Kunitz-type inhibitor) family.

Its function is as follows. WTI-1B inhibits trypsin stoichiometrically. This chain is Trypsin inhibitor 1A, found in Psophocarpus tetragonolobus (Winged bean).